The primary structure comprises 437 residues: MSHEAEEDLLEYSDNEQEVQVDNKATEVNAEGNGESQAKDSDKKGSYVGIHSTGFKDFLLKPELSRAIIDCGFEHPSEVQQHTIPQSIHGTDVLCQAKSGLGKTAVFVLSTLQQLDPVQGEVSVVVLCNARELAYQIRNEYLRFSKYMPDVKTAVFYGGTEYKNDIDLLSKKETVPHIIVATPGRLKALVRDKHIDLSHVKNFVIDECDKVLEELDMRRDVQDIFRATPRDKQVMMFSATLSQEIRPICRRFLQNPLEIFVDDEAKLTLHGLQQYYIKLNEKEKNRKLAQLLDDLEFNQVIIFVKSTVRANELTKLLNASNFPAITVHGHMKQEERIARYKAFKEFEKRICVSTDVFGRGIDIERINLAINYDMPNEADQYLHRVGRAGRFGTKGLAISMISSEDDEQVLAKIQERFDVKITEFPEEGVDPSTYLNT.

Over residues 1–19 the composition is skewed to acidic residues; the sequence is MSHEAEEDLLEYSDNEQEV. The tract at residues 1–45 is disordered; that stretch reads MSHEAEEDLLEYSDNEQEVQVDNKATEVNAEGNGESQAKDSDKKG. The short motif at 53-81 is the Q motif element; that stretch reads TGFKDFLLKPELSRAIIDCGFEHPSEVQQ. Positions 84–259 constitute a Helicase ATP-binding domain; it reads IPQSIHGTDV…RRFLQNPLEI (176 aa). ATP is bound at residue 97–104; that stretch reads AKSGLGKT. The DECD box signature appears at 206-209; sequence DECD. Residues 287 to 432 form the Helicase C-terminal domain; the sequence is KLAQLLDDLE…EFPEEGVDPS (146 aa).

It belongs to the DEAD box helicase family. DECD subfamily.

The protein localises to the nucleus. The catalysed reaction is ATP + H2O = ADP + phosphate + H(+). Functionally, ATP-binding RNA helicase involved in transcription elongation and required for the export of mRNA out of the nucleus. SUB2 also plays a role in pre-mRNA splicing and spliceosome assembly. May be involved in rDNA and telomeric silencing, and maintenance of genome integrity. The chain is ATP-dependent RNA helicase SUB2 (SUB2) from Kluyveromyces lactis (strain ATCC 8585 / CBS 2359 / DSM 70799 / NBRC 1267 / NRRL Y-1140 / WM37) (Yeast).